The following is a 472-amino-acid chain: Aspartyl/glutamyl-tRNA(Asn/Gln) amidotransferase subunit B (472 aa).

This sequence belongs to the GatB/GatE family. GatB subfamily. Heterotrimer of A, B and C subunits.

It carries out the reaction L-glutamyl-tRNA(Gln) + L-glutamine + ATP + H2O = L-glutaminyl-tRNA(Gln) + L-glutamate + ADP + phosphate + H(+). It catalyses the reaction L-aspartyl-tRNA(Asn) + L-glutamine + ATP + H2O = L-asparaginyl-tRNA(Asn) + L-glutamate + ADP + phosphate + 2 H(+). Its function is as follows. Allows the formation of correctly charged Asn-tRNA(Asn) or Gln-tRNA(Gln) through the transamidation of misacylated Asp-tRNA(Asn) or Glu-tRNA(Gln) in organisms which lack either or both of asparaginyl-tRNA or glutaminyl-tRNA synthetases. The reaction takes place in the presence of glutamine and ATP through an activated phospho-Asp-tRNA(Asn) or phospho-Glu-tRNA(Gln). This Campylobacter jejuni subsp. jejuni serotype O:6 (strain 81116 / NCTC 11828) protein is Aspartyl/glutamyl-tRNA(Asn/Gln) amidotransferase subunit B.